Reading from the N-terminus, the 103-residue chain is Acyl carrier protein (103 aa).

Residues 14-89 form the Carrier domain; sequence NIVSNIVQDI…EFIDFTLQTI (76 aa). O-(pantetheine 4'-phosphoryl)serine is present on S49.

The protein belongs to the acyl carrier protein (ACP) family. 4'-phosphopantetheine is transferred from CoA to a specific serine of apo-ACP by AcpS. This modification is essential for activity because fatty acids are bound in thioester linkage to the sulfhydryl of the prosthetic group.

The protein localises to the plastid. It localises to the cyanelle. It participates in lipid metabolism; fatty acid biosynthesis. Carrier of the growing fatty acid chain in fatty acid biosynthesis. The protein is Acyl carrier protein of Cyanophora paradoxa.